The following is a 196-amino-acid chain: Secreted phosphoprotein 24 (196 aa).

The signal sequence occupies residues 1–19 (MKWCGVLMVALLQSLCCSG). Intrachain disulfides connect cysteine 83–cysteine 94 and cysteine 107–cysteine 125. The disordered stretch occupies residues 125–196 (CGQDSSSSES…RGDSFGNHLE (72 aa)). Residues 129-138 (SSSSESSSEE) show a composition bias toward low complexity.

It belongs to the SPP2 family. In terms of processing, multiply phosphorylated at serine residues.

It localises to the secreted. Functionally, could coordinate an aspect of bone turnover. In Salmo salar (Atlantic salmon), this protein is Secreted phosphoprotein 24 (spp2).